Here is a 289-residue protein sequence, read N- to C-terminus: Geranylgeranyl diphosphate synthase (289 aa).

2 residues coordinate isopentenyl diphosphate: arginine 43 and histidine 73. Mg(2+) is bound by residues aspartate 80 and aspartate 86. Position 91 (arginine 91) interacts with (2E,6E)-farnesyl diphosphate. Arginine 92 serves as a coordination point for isopentenyl diphosphate. Lysine 170, threonine 171, and glutamine 205 together coordinate (2E,6E)-farnesyl diphosphate.

This sequence belongs to the FPP/GGPP synthase family. It depends on Mg(2+) as a cofactor.

It catalyses the reaction isopentenyl diphosphate + (2E,6E)-farnesyl diphosphate = (2E,6E,10E)-geranylgeranyl diphosphate + diphosphate. It functions in the pathway isoprenoid biosynthesis; geranylgeranyl diphosphate biosynthesis; geranylgeranyl diphosphate from farnesyl diphosphate and isopentenyl diphosphate: step 1/1. Functionally, catalyzes the condensation of farnesyl diphosphate (FPP) and isopentenyl diphosphate (IPP) to yield geranylgeranyl diphosphate (GGPP) needed for biosynthesis of carotenoids and diterpenes. The chain is Geranylgeranyl diphosphate synthase (crtE) from Rhodobacter capsulatus (strain ATCC BAA-309 / NBRC 16581 / SB1003).